The chain runs to 542 residues: Glutamyl-tRNA(Gln) amidotransferase subunit A, mitochondrial (542 aa).

Catalysis depends on charge relay system residues lysine 55 and serine 143. Serine 167 functions as the Acyl-ester intermediate in the catalytic mechanism.

It belongs to the amidase family. GatA subfamily. In terms of assembly, subunit of the heterotrimeric GatCAB amidotransferase (AdT) complex, composed of A, B and C subunits.

It localises to the mitochondrion. It carries out the reaction L-glutamyl-tRNA(Gln) + L-glutamine + ATP + H2O = L-glutaminyl-tRNA(Gln) + L-glutamate + ADP + phosphate + H(+). In terms of biological role, allows the formation of correctly charged Gln-tRNA(Gln) through the transamidation of misacylated Glu-tRNA(Gln) in the mitochondria. The reaction takes place in the presence of glutamine and ATP through an activated gamma-phospho-Glu-tRNA(Gln). This chain is Glutamyl-tRNA(Gln) amidotransferase subunit A, mitochondrial, found in Neurospora crassa (strain ATCC 24698 / 74-OR23-1A / CBS 708.71 / DSM 1257 / FGSC 987).